We begin with the raw amino-acid sequence, 238 residues long: Uridylate kinase (238 aa).

12–15 (KLSG) provides a ligand contact to ATP. Gly-54 serves as a coordination point for UMP. Gly-55 and Arg-59 together coordinate ATP. UMP-binding positions include Asp-74 and 135 to 142 (TGNPFFTT). Residues Thr-162, Tyr-168, and Asp-171 each contribute to the ATP site.

This sequence belongs to the UMP kinase family. As to quaternary structure, homohexamer.

It localises to the cytoplasm. The enzyme catalyses UMP + ATP = UDP + ADP. The protein operates within pyrimidine metabolism; CTP biosynthesis via de novo pathway; UDP from UMP (UMPK route): step 1/1. With respect to regulation, inhibited by UTP. In terms of biological role, catalyzes the reversible phosphorylation of UMP to UDP. The chain is Uridylate kinase from Janthinobacterium sp. (strain Marseille) (Minibacterium massiliensis).